The primary structure comprises 122 residues: Large ribosomal subunit protein uL18 (122 aa).

This sequence belongs to the universal ribosomal protein uL18 family. As to quaternary structure, part of the 50S ribosomal subunit; part of the 5S rRNA/L5/L18/L25 subcomplex. Contacts the 5S and 23S rRNAs.

Its function is as follows. This is one of the proteins that bind and probably mediate the attachment of the 5S RNA into the large ribosomal subunit, where it forms part of the central protuberance. This is Large ribosomal subunit protein uL18 from Acetivibrio thermocellus (strain ATCC 27405 / DSM 1237 / JCM 9322 / NBRC 103400 / NCIMB 10682 / NRRL B-4536 / VPI 7372) (Clostridium thermocellum).